The primary structure comprises 193 residues: A-type ATP synthase subunit E (193 aa).

Belongs to the V-ATPase E subunit family. In terms of assembly, has multiple subunits with at least A(3), B(3), C, D, E, F, H, I and proteolipid K(x).

Its subcellular location is the cell membrane. In terms of biological role, component of the A-type ATP synthase that produces ATP from ADP in the presence of a proton gradient across the membrane. In Haloquadratum walsbyi (strain DSM 16790 / HBSQ001), this protein is A-type ATP synthase subunit E.